The chain runs to 183 residues: MFHGSGLFALLLMVLEWTRPGLSSPLRPICDLRVLDHFIKEAWDAEAAMRTCKDDCSIATNVTVPLTRVDFEVWEAMNIEEQAQEVQSGLHMLNEAIGSLQISNQTEVLQSHIDASIRNIASIRQVLRSLSIPEYVPPTSSGEDKETQKISSISELFQVHVNFLRGKARLLLANAPVCRQGVS.

An N-terminal signal peptide occupies residues 1–23 (MFHGSGLFALLLMVLEWTRPGLS). Cystine bridges form between C30–C178 and C52–C56. N-linked (GlcNAc...) asparagine glycans are attached at residues N61 and N104.

Belongs to the EPO/TPO family. N-glycosylated. Expressed in heart and liver.

It is found in the secreted. Its function is as follows. Erythropoietin is the principal hormone involved in the regulation of erythrocyte differentiation and the maintenance of a physiological level of circulating erythrocyte mass. The chain is Erythropoietin (epo) from Danio rerio (Zebrafish).